The following is a 224-amino-acid chain: Response regulator protein GraR (224 aa).

The region spanning 2-115 (QILLVEDDNT…VLIAKLQAIY (114 aa)) is the Response regulatory domain. A 4-aspartylphosphate modification is found at D51. Residues 126 to 224 (KRTLTWQDAV…KVGKGYMAHE (99 aa)) constitute a DNA-binding region (ompR/PhoB-type). T128, T130, and T149 each carry phosphothreonine.

Interacts with GraX. In terms of processing, phosphorylated by GraS. Phosphorylated by Stk1; phosphorylation increases the DNA-binding activity of GraR.

Its subcellular location is the cytoplasm. In terms of biological role, member of the two-component regulatory system GraR/GraS involved in resistance against cationic antimicrobial peptides (CAMPs). Upon phosphorylation by GraS, functions as a transcription regulator by direct binding to promoter regions of target genes such as adhesins, exoproteins, transporters, toxins, and proteins involved in cell wall synthesis. Down-regulates the expression of many genes involved in RNA and amino acid synthesis or glycolysis. This is Response regulator protein GraR (graR) from Staphylococcus aureus (strain MRSA252).